Consider the following 423-residue polypeptide: Serine--tRNA ligase (423 aa).

2 stretches are compositionally biased toward basic and acidic residues: residues 1 to 24 and 62 to 71; these read MIDLKQLRDDPDRVRESQRTRGED and KMRDASPEEK. Positions 1–71 are disordered; that stretch reads MIDLKQLRDD…KMRDASPEEK (71 aa). 230–232 contributes to the L-serine binding site; the sequence is TSE. Residues 261-263 and Val-277 each bind ATP; that span reads RRE. Glu-284 is an L-serine binding site. An ATP-binding site is contributed by 348–351; it reads ELTS. Residue Thr-383 coordinates L-serine.

Belongs to the class-II aminoacyl-tRNA synthetase family. Type-1 seryl-tRNA synthetase subfamily. In terms of assembly, homodimer. The tRNA molecule binds across the dimer.

It is found in the cytoplasm. It carries out the reaction tRNA(Ser) + L-serine + ATP = L-seryl-tRNA(Ser) + AMP + diphosphate + H(+). The enzyme catalyses tRNA(Sec) + L-serine + ATP = L-seryl-tRNA(Sec) + AMP + diphosphate + H(+). Its pathway is aminoacyl-tRNA biosynthesis; selenocysteinyl-tRNA(Sec) biosynthesis; L-seryl-tRNA(Sec) from L-serine and tRNA(Sec): step 1/1. Catalyzes the attachment of serine to tRNA(Ser). Is also able to aminoacylate tRNA(Sec) with serine, to form the misacylated tRNA L-seryl-tRNA(Sec), which will be further converted into selenocysteinyl-tRNA(Sec). This Corynebacterium kroppenstedtii (strain DSM 44385 / JCM 11950 / CIP 105744 / CCUG 35717) protein is Serine--tRNA ligase.